Reading from the N-terminus, the 260-residue chain is MIEINNKVDFIFYTNGTPNTYKIKLILLELENSHGITYESKTIDITKKENYSDEFVKINPNKKVPAIVDQTGEKPIIVFESVSILIYLAQKYNTFLPDFKTNPKENSDVITWSVWQAANLGPAFGQFFHFSYFSPTVQEYSLHRFNNEAQRVLRLLDDRLSVSPYIGGNEFSIADIASAGWLLYLNFVPFYNATKERFPNIFKWLDLIGQRDAVKQVNQQISEGFKNFSTAGIRALFTNDPELINAKAPVGIENVVLKYD.

The region spanning 7–96 (KVDFIFYTNG…YLAQKYNTFL (90 aa)) is the GST N-terminal domain. A GST C-terminal domain is found at 102-228 (NPKENSDVIT…QQISEGFKNF (127 aa)).

This sequence belongs to the GST superfamily.

In Dictyostelium discoideum (Social amoeba), this protein is Glutathione S-transferase domain-containing protein DDB_G0280881.